A 361-amino-acid chain; its full sequence is Deoxyhypusine hydroxylase (361 aa).

HEAT-like PBS-type repeat units follow at residues 59–85 (LKHELAYVLGQLLNTRALPTLSRVLEN), 94–120 (VRHEAAEALGAIGAEESLPILRKYMQD), 183–211 (QRYRAMFALRDFGAGSKEAVEALADGFRD), and 216–242 (FRHEIAYIFGQLSSPYSIPSLLSRLRD). Fe cation contacts are provided by histidine 61, glutamate 62, histidine 96, and glutamate 97. Residues histidine 218, glutamate 219, histidine 251, and glutamate 252 each contribute to the Fe cation site.

Belongs to the deoxyhypusine hydroxylase family. The cofactor is Fe(2+).

It localises to the cytoplasm. The protein localises to the nucleus. It carries out the reaction [eIF5A protein]-deoxyhypusine + AH2 + O2 = [eIF5A protein]-hypusine + A + H2O. The protein operates within protein modification; eIF5A hypusination. Its function is as follows. Catalyzes the hydroxylation of the N(6)-(4-aminobutyl)-L-lysine intermediate to form hypusine, an essential post-translational modification only found in mature eIF-5A factor. This Cryptococcus neoformans var. neoformans serotype D (strain JEC21 / ATCC MYA-565) (Filobasidiella neoformans) protein is Deoxyhypusine hydroxylase.